Consider the following 56-residue polypeptide: Large ribosomal subunit protein bL33 (56 aa).

It belongs to the bacterial ribosomal protein bL33 family.

The polypeptide is Large ribosomal subunit protein bL33 (Vibrio campbellii (strain ATCC BAA-1116)).